Consider the following 972-residue polypeptide: Optomotor-blind protein (972 aa).

6 disordered regions span residues 44 to 248 (SLLT…YFPA), 263 to 286 (PGLY…HAHH), 508 to 563 (AKGF…HPHA), 645 to 676 (ADVE…TGSP), 805 to 889 (AVTP…PSEL), and 918 to 972 (EEAA…GTDQ). Low complexity-rich tracts occupy residues 49–80 (GSNN…NTNN) and 97–142 (SNHS…NNTS). The segment covering 155-176 (PPSPAGTPPPTIVGLPPIPPPN) has biased composition (pro residues). 2 stretches are compositionally biased toward low complexity: residues 177-193 (NNSS…AAAH) and 201-212 (AHHSPSTGAAAP). Residues 213 to 225 (PAGPTGLPPPTPP) show a composition bias toward pro residues. The segment covering 226-237 (HHLQQQQQQQQH) has biased composition (low complexity). Residues 274 to 286 (PPHHPGAHPHAHH) are compositionally biased toward basic residues. The segment at residues 332–513 (LEGKDLWEKF…NNPFAKGFRD (182 aa)) is a DNA-binding region (T-box). Residues 818–831 (PPGGGGGGLGGGVV) are compositionally biased toward gly residues. Positions 835-851 (PRSLSSSPRPRPASHSP) are enriched in low complexity. The residue at position 887 (Ser-887) is a Phosphoserine. Residues 952–963 (HPHHQTHLHSHH) show a composition bias toward basic residues.

In third-instar larvae, expressed in the brain region that will develop into optic lobes and more weakly in the thoracic part of the ventral ganglion.

It localises to the nucleus. Functionally, essential protein that may function as a transcription regulator. Vital for pupal development. Required for proper development of the optic lobes and wings, and abdominal pigmentation. This Drosophila melanogaster (Fruit fly) protein is Optomotor-blind protein (bi).